A 76-amino-acid chain; its full sequence is Small ribosomal subunit protein bS18 (76 aa).

This sequence belongs to the bacterial ribosomal protein bS18 family. Part of the 30S ribosomal subunit. Forms a tight heterodimer with protein bS6.

Binds as a heterodimer with protein bS6 to the central domain of the 16S rRNA, where it helps stabilize the platform of the 30S subunit. This is Small ribosomal subunit protein bS18 from Stutzerimonas stutzeri (strain A1501) (Pseudomonas stutzeri).